The chain runs to 171 residues: Adenine phosphoribosyltransferase (171 aa).

Belongs to the purine/pyrimidine phosphoribosyltransferase family. As to quaternary structure, homodimer.

It is found in the cytoplasm. It carries out the reaction AMP + diphosphate = 5-phospho-alpha-D-ribose 1-diphosphate + adenine. It functions in the pathway purine metabolism; AMP biosynthesis via salvage pathway; AMP from adenine: step 1/1. Its function is as follows. Catalyzes a salvage reaction resulting in the formation of AMP, that is energically less costly than de novo synthesis. The polypeptide is Adenine phosphoribosyltransferase (Acetivibrio thermocellus (strain ATCC 27405 / DSM 1237 / JCM 9322 / NBRC 103400 / NCIMB 10682 / NRRL B-4536 / VPI 7372) (Clostridium thermocellum)).